Reading from the N-terminus, the 173-residue chain is Alpha-crystallin A chain (173 aa).

Met-1 carries the N-acetylmethionine modification. Residues 1–63 (MDIAIQHPWF…RTVLDSGISE (63 aa)) are required for complex formation with BFSP1 and BFSP2. The residue at position 6 (Gln-6) is a Deamidated glutamine; partial. Phosphoserine is present on Ser-45. The residue at position 50 (Gln-50) is a Deamidated glutamine; partial. Residues 52–162 (LFRTVLDSGI…GHSERAIPVS (111 aa)) form the sHSP domain. N6-acetyllysine is present on residues Lys-70 and Lys-99. His-100 contacts Zn(2+). Asn-101 carries the post-translational modification Deamidated asparagine; partial. Residues Glu-102 and His-107 each contribute to the Zn(2+) site. Residue Ser-122 is modified to Phosphoserine. Asn-123 carries the deamidated asparagine; partial modification. The segment at 144–173 (PKVPSGMDAGHSERAIPVSREEKPSSAPSS) is disordered. Residues 153-167 (GHSERAIPVSREEKP) are compositionally biased toward basic and acidic residues. His-154 provides a ligand contact to Zn(2+). A glycan (O-linked (GlcNAc) serine) is linked at Ser-162.

Belongs to the small heat shock protein (HSP20) family. In terms of assembly, heteromer composed of three CRYAA and one CRYAB subunits. Inter-subunit bridging via zinc ions enhances stability, which is crucial as there is no protein turn over in the lens. Can also form homodimers and homotetramers (dimers of dimers) which serve as the building blocks of homooligomers. Within homooligomers, the zinc-binding motif is created from residues of 3 different molecules. His-100 and Glu-102 from one molecule are ligands of the zinc ion, and His-107 and His-154 residues from additional molecules complete the site with tetrahedral coordination geometry. Part of a complex required for lens intermediate filament formation composed of BFSP1, BFSP2 and CRYAA. Post-translationally, acetylation at Lys-70 may increase chaperone activity. Undergoes age-dependent proteolytical cleavage at the C-terminus.

The protein localises to the cytoplasm. Its subcellular location is the nucleus. In terms of biological role, contributes to the transparency and refractive index of the lens. Acts as a chaperone, preventing aggregation of various proteins under a wide range of stress conditions. Required for the correct formation of lens intermediate filaments as part of a complex composed of BFSP1, BFSP2 and CRYAA. The chain is Alpha-crystallin A chain (CRYAA) from Melursus ursinus (Sloth bear).